The primary structure comprises 204 residues: Leucyl/phenylalanyl-tRNA--protein transferase (204 aa).

It belongs to the L/F-transferase family.

The protein resides in the cytoplasm. The catalysed reaction is N-terminal L-lysyl-[protein] + L-leucyl-tRNA(Leu) = N-terminal L-leucyl-L-lysyl-[protein] + tRNA(Leu) + H(+). It carries out the reaction N-terminal L-arginyl-[protein] + L-leucyl-tRNA(Leu) = N-terminal L-leucyl-L-arginyl-[protein] + tRNA(Leu) + H(+). The enzyme catalyses L-phenylalanyl-tRNA(Phe) + an N-terminal L-alpha-aminoacyl-[protein] = an N-terminal L-phenylalanyl-L-alpha-aminoacyl-[protein] + tRNA(Phe). In terms of biological role, functions in the N-end rule pathway of protein degradation where it conjugates Leu, Phe and, less efficiently, Met from aminoacyl-tRNAs to the N-termini of proteins containing an N-terminal arginine or lysine. The protein is Leucyl/phenylalanyl-tRNA--protein transferase of Brucella anthropi (strain ATCC 49188 / DSM 6882 / CCUG 24695 / JCM 21032 / LMG 3331 / NBRC 15819 / NCTC 12168 / Alc 37) (Ochrobactrum anthropi).